The sequence spans 243 residues: Pyridoxine 5'-phosphate synthase (243 aa).

Asparagine 9 serves as a coordination point for 3-amino-2-oxopropyl phosphate. 11–12 (DH) contacts 1-deoxy-D-xylulose 5-phosphate. Residue arginine 20 participates in 3-amino-2-oxopropyl phosphate binding. Histidine 45 serves as the catalytic Proton acceptor. Residues arginine 47 and histidine 52 each coordinate 1-deoxy-D-xylulose 5-phosphate. Glutamate 72 (proton acceptor) is an active-site residue. Threonine 102 is a binding site for 1-deoxy-D-xylulose 5-phosphate. Histidine 193 functions as the Proton donor in the catalytic mechanism. Residues glycine 194 and 215 to 216 (GH) contribute to the 3-amino-2-oxopropyl phosphate site.

It belongs to the PNP synthase family. Homooctamer; tetramer of dimers.

It localises to the cytoplasm. It catalyses the reaction 3-amino-2-oxopropyl phosphate + 1-deoxy-D-xylulose 5-phosphate = pyridoxine 5'-phosphate + phosphate + 2 H2O + H(+). The protein operates within cofactor biosynthesis; pyridoxine 5'-phosphate biosynthesis; pyridoxine 5'-phosphate from D-erythrose 4-phosphate: step 5/5. Catalyzes the complicated ring closure reaction between the two acyclic compounds 1-deoxy-D-xylulose-5-phosphate (DXP) and 3-amino-2-oxopropyl phosphate (1-amino-acetone-3-phosphate or AAP) to form pyridoxine 5'-phosphate (PNP) and inorganic phosphate. The chain is Pyridoxine 5'-phosphate synthase from Pseudoalteromonas translucida (strain TAC 125).